The sequence spans 344 residues: N-acetyl-gamma-glutamyl-phosphate reductase (344 aa).

Cys149 is a catalytic residue.

It belongs to the NAGSA dehydrogenase family. Type 1 subfamily.

It is found in the cytoplasm. It catalyses the reaction N-acetyl-L-glutamate 5-semialdehyde + phosphate + NADP(+) = N-acetyl-L-glutamyl 5-phosphate + NADPH + H(+). It participates in amino-acid biosynthesis; L-arginine biosynthesis; N(2)-acetyl-L-ornithine from L-glutamate: step 3/4. Its function is as follows. Catalyzes the NADPH-dependent reduction of N-acetyl-5-glutamyl phosphate to yield N-acetyl-L-glutamate 5-semialdehyde. This chain is N-acetyl-gamma-glutamyl-phosphate reductase, found in Thermoanaerobacter sp. (strain X514).